A 257-amino-acid polypeptide reads, in one-letter code: Cytochrome c oxidase subunit 3 (257 aa).

6 helical membrane-spanning segments follow: residues 13-33, 36-56, 80-100, 154-174, 195-215, and 237-257; these read PWPI…VSYF, LSMY…FQWW, GMIL…WAFF, YISA…FTMF, FFMT…FLLV, and AWYW…MYWW.

It belongs to the cytochrome c oxidase subunit 3 family. Component of the cytochrome c oxidase (complex IV, CIV), a multisubunit enzyme composed of a catalytic core of 3 subunits and several supernumerary subunits. The complex exists as a monomer or a dimer and forms supercomplexes (SCs) in the inner mitochondrial membrane with ubiquinol-cytochrome c oxidoreductase (cytochrome b-c1 complex, complex III, CIII).

Its subcellular location is the mitochondrion inner membrane. The enzyme catalyses 4 Fe(II)-[cytochrome c] + O2 + 8 H(+)(in) = 4 Fe(III)-[cytochrome c] + 2 H2O + 4 H(+)(out). Functionally, component of the cytochrome c oxidase, the last enzyme in the mitochondrial electron transport chain which drives oxidative phosphorylation. The respiratory chain contains 3 multisubunit complexes succinate dehydrogenase (complex II, CII), ubiquinol-cytochrome c oxidoreductase (cytochrome b-c1 complex, complex III, CIII) and cytochrome c oxidase (complex IV, CIV), that cooperate to transfer electrons derived from NADH and succinate to molecular oxygen, creating an electrochemical gradient over the inner membrane that drives transmembrane transport and the ATP synthase. Cytochrome c oxidase is the component of the respiratory chain that catalyzes the reduction of oxygen to water. Electrons originating from reduced cytochrome c in the intermembrane space (IMS) are transferred via the dinuclear copper A center (CU(A)) of subunit 2 and heme A of subunit 1 to the active site in subunit 1, a binuclear center (BNC) formed by heme A3 and copper B (CU(B)). The BNC reduces molecular oxygen to 2 water molecules using 4 electrons from cytochrome c in the IMS and 4 protons from the mitochondrial matrix. The protein is Cytochrome c oxidase subunit 3 (COIII) of Rhipicephalus sanguineus (Brown dog tick).